A 493-amino-acid chain; its full sequence is Transmembrane and coiled-coil domain-containing protein 6 (493 aa).

The stretch at glycine 15–glutamate 84 forms a coiled coil. Helical transmembrane passes span valine 338–proline 358 and proline 386–cysteine 406.

The protein resides in the membrane. This is Transmembrane and coiled-coil domain-containing protein 6 (TMCO6) from Homo sapiens (Human).